Reading from the N-terminus, the 348-residue chain is Mamu class I histocompatibility antigen, alpha chain F (348 aa).

An N-terminal signal peptide occupies residues 1–21; sequence MAPRTLLLVLSGALALTETWA. Positions 22 to 113 are alpha-1; it reads GSHSLRYFST…LLLRYNQSEA (92 aa). Over 22–307 the chain is Extracellular; sequence GSHSLRYFST…ESSSQPTIPI (286 aa). A glycan (N-linked (GlcNAc...) asparagine) is linked at Asn-109. The tract at residues 114–205 is alpha-2; sequence GSHTLQGMNG…ENGKETLQRA (92 aa). Intrachain disulfides connect Cys-124–Cys-187 and Cys-226–Cys-282. Positions 206 to 297 are alpha-3; sequence DPPKAHVAHH…GLPQPLTLRW (92 aa). Residues 208-296 enclose the Ig-like C1-type domain; sequence PKAHVAHHPI…EGLPQPLTLR (89 aa). The connecting peptide stretch occupies residues 298–307; sequence ESSSQPTIPI. Residues 308 to 331 form a helical membrane-spanning segment; it reads VGIVAGLAVLAVVVTGAVVAAVMW. Residues 332-348 are Cytoplasmic-facing; the sequence is RRKSSDRNRGSYSQPTM.

Belongs to the MHC class I family. Heterodimer of an alpha chain and a beta chain (beta-2-microglobulin).

The protein localises to the membrane. Its function is as follows. Involved in the presentation of foreign antigens to the immune system. The polypeptide is Mamu class I histocompatibility antigen, alpha chain F (Mamu-F) (Macaca mulatta (Rhesus macaque)).